Here is a 385-residue protein sequence, read N- to C-terminus: Probable di-N-acetylchitobiase 2 (385 aa).

The first 15 residues, 1–15, serve as a signal peptide directing secretion; it reads MRIILLLFLIVFVVA. The GH18 domain occupies 16–377; the sequence is QSSSSSSSSG…DALASFFPQS (362 aa). 2 N-linked (GlcNAc...) asparagine glycosylation sites follow: asparagine 51 and asparagine 101. The active-site Proton donor is glutamate 129. N-linked (GlcNAc...) asparagine glycosylation is found at asparagine 223, asparagine 272, and asparagine 296.

It belongs to the glycosyl hydrolase 18 family.

Its subcellular location is the lysosome. Functionally, involved in the degradation of asparagine-linked glycoproteins. May hydrolyze of N-acetyl-beta-D-glucosamine (1-4)N-acetylglucosamine chitobiose core from the reducing end of the bond. The protein is Probable di-N-acetylchitobiase 2 (ctbs2) of Dictyostelium discoideum (Social amoeba).